The sequence spans 448 residues: Phosphoglucosamine mutase (448 aa).

Serine 104 acts as the Phosphoserine intermediate in catalysis. Residues serine 104, aspartate 243, aspartate 245, and aspartate 247 each contribute to the Mg(2+) site. Residue serine 104 is modified to Phosphoserine.

Belongs to the phosphohexose mutase family. Mg(2+) serves as cofactor. Post-translationally, activated by phosphorylation.

The catalysed reaction is alpha-D-glucosamine 1-phosphate = D-glucosamine 6-phosphate. Catalyzes the conversion of glucosamine-6-phosphate to glucosamine-1-phosphate. This is Phosphoglucosamine mutase from Xylella fastidiosa (strain Temecula1 / ATCC 700964).